A 635-amino-acid chain; its full sequence is Sodium- and chloride-dependent creatine transporter 1 (635 aa).

Positions 1-35 (MAKKSAENGIYSVSGDEKKGPLIAPGPDGAPAKGD) are disordered. Residues 1 to 60 (MAKKSAENGIYSVSGDEKKGPLIAPGPDGAPAKGDGPAGLGAPGGCLAVPPRETWTRQMD) lie on the Cytoplasmic side of the membrane. The segment covering 25 to 35 (PGPDGAPAKGD) has biased composition (low complexity). Residues 61–81 (FIMSCVGFAVGLGNVWRFPYL) traverse the membrane as a helical segment. Topologically, residues 82–87 (CYKNGG) are extracellular. Residues 88-108 (GVFLIPYVLIALVGGIPIFFL) form a helical membrane-spanning segment. The Cytoplasmic portion of the chain corresponds to 109–138 (EISLGQFMKAGSINVWNICPLFKGLGYASM). Residues 139 to 159 (VIVFYCNTYYIMVLAWGFYYL) traverse the membrane as a helical segment. The Extracellular segment spans residues 160–230 (VKSFTTTLPW…LSGGLEVPGA (71 aa)). N-linked (GlcNAc...) asparagine glycosylation is found at Asn-192 and Asn-197. A helical membrane pass occupies residues 231-251 (LNSEVTLCLLACWVLVYFCVW). Topologically, residues 252-269 (KGVKSTGKIVYFTATFPY) are cytoplasmic. A helical membrane pass occupies residues 270-290 (VVLVVLLVRGVLLPGALDGII). The Extracellular portion of the chain corresponds to 291–304 (YYLKPDWSKLRSPQ). A helical membrane pass occupies residues 305 to 325 (VWIDAGTQIFFSYAIGLGALT). The Cytoplasmic segment spans residues 326-341 (ALGSYNRFNNNCYKDA). A helical transmembrane segment spans residues 342–362 (IILALINSGTSFFAGFVVFSI). Residues 363–394 (LGFMATEQGVHISKVAESGPGLAFIAYPRAVT) are Extracellular-facing. Residues 395-415 (LMPVAPLWAALFFFMLLLLGL) traverse the membrane as a helical segment. Residues 416–444 (DSQFVGVEGFITGLLDLLPASYYFRFQRE) are Cytoplasmic-facing. Residues 445-465 (ISVALCCALCFVIDLSMVQMA) traverse the membrane as a helical segment. The Extracellular segment spans residues 466–479 (GMYVFQLFDYYSAS). The chain crosses the membrane as a helical span at residues 480 to 500 (GTTLLWQAFWECVAVAWVYGA). Topologically, residues 501–520 (DRFMDDIACMIGYRPCPWMK) are cytoplasmic. A helical membrane pass occupies residues 521-541 (WCWSFFTPLVCMGIFIFNIVY). Residues 542–560 (YKPLVYNKTYVYPWWGEAM) are Extracellular-facing. A glycan (N-linked (GlcNAc...) asparagine) is linked at Asn-548. Residues 561-581 (GWAFALSSMLCVPLHLLGCLL) traverse the membrane as a helical segment. At 582–635 (RAKGTMAERWQHLTQPVWGLHHLEYRAQDADVRGLTTLTPVSESSKVVVVESVM) the chain is on the cytoplasmic side. Phosphothreonine is present on residues Thr-617 and Thr-620. Ser-623 bears the Phosphoserine mark.

Belongs to the sodium:neurotransmitter symporter (SNF) (TC 2.A.22) family. SLC6A8 subfamily. Glycosylated. Prominent in kidney, heart, and muscle, also present in brain, but not in liver and intestine.

It localises to the cell membrane. The protein localises to the apical cell membrane. The catalysed reaction is creatine(out) + chloride(out) + 2 Na(+)(out) = creatine(in) + chloride(in) + 2 Na(+)(in). Its function is as follows. Creatine:sodium symporter which mediates the uptake of creatine. Plays an important role in supplying creatine to the brain via the blood-brain barrier. The protein is Sodium- and chloride-dependent creatine transporter 1 (SLC6A8) of Oryctolagus cuniculus (Rabbit).